The sequence spans 189 residues: Ras-like protein 1 (189 aa).

GTP is bound at residue 10–17; it reads GAGGVGKS. An Effector region motif is present at residues 32 to 40; the sequence is YDPTIEDSY. GTP-binding positions include 57 to 61 and 116 to 119; these read DTAGQ and NKCD. A Cysteine methyl ester modification is found at C186. C186 carries S-geranylgeranyl cysteine lipidation. Residues 187-189 constitute a propeptide, removed in mature form; it reads KIL.

The protein belongs to the small GTPase superfamily. Ras family.

The protein localises to the cell membrane. It catalyses the reaction GTP + H2O = GDP + phosphate + H(+). Alternates between an inactive form bound to GDP and an active form bound to GTP. Activated by a guanine nucleotide-exchange factor (GEF) and inactivated by a GTPase-activating protein (GAP). Ras proteins bind GDP/GTP and possess intrinsic GTPase activity. Plays a role in eye development by regulating cell growth, survival of postmitotic ommatidial cells and differentiation of photoreceptor cells. During larval development, mediates Ptth/tor signaling leading to the production of ecdysone, a hormone required for the initiation of metamorphosis. The protein is Ras-like protein 1 of Drosophila persimilis (Fruit fly).